Reading from the N-terminus, the 547-residue chain is Probable ABC transporter periplasmic-binding protein SapA (547 aa).

A signal peptide spans methionine 1 to alanine 21.

This sequence belongs to the bacterial solute-binding protein 5 family.

The protein localises to the periplasm. In terms of biological role, not part of a putrescine export system. Very similar to a S.typhimurium protein implicated in antimicrobial peptide resistance, but the SapBCDF operon in E.coli is implicated in putrescine export. This Escherichia coli (strain K12) protein is Probable ABC transporter periplasmic-binding protein SapA (sapA).